The chain runs to 348 residues: Ileal sodium/bile acid cotransporter (348 aa).

At 1 to 28 (MDNSSICNPNATICEGDSCIAPESNFNA) the chain is on the extracellular side. N-linked (GlcNAc...) asparagine glycosylation is found at Asn3 and Asn10. The helical transmembrane segment at 29–49 (ILSVVMSTVLTILLALVMFSM) threads the bilayer. Over 50 to 81 (GCNVELHKFLGHLRRPWGIVVGFLCQFGIMPL) the chain is Cytoplasmic. A helical transmembrane segment spans residues 82 to 102 (TGFVLSVAFGILPVQAVVVLI). The Extracellular segment spans residues 103-126 (QGCCPGGTASNILAYWVDGDMDLS). The helical transmembrane segment at 127–147 (VSMTTCSTLLALGMMPLCLFI) threads the bilayer. At 148-157 (YTKMWVDSGT) the chain is on the cytoplasmic side. A helical transmembrane segment spans residues 158–178 (IVIPYDSIGTSLVALVIPVSI). Over 179–195 (GMYVNHKWPQKAKIILK) the chain is Extracellular. The chain crosses the membrane as a helical span at residues 196-216 (IGSIAGAILIVLIAVVGGILY). Residues 217–224 (QSAWTIEP) lie on the Cytoplasmic side of the membrane. Residues 225 to 245 (KLWIIGTIYPIAGYGLGFFLA) traverse the membrane as a helical segment. Residues 246-284 (RIAGQPWYRCRTVALETGLQNTQLCSTIVQLSFSPEDLN) lie on the Extracellular side of the membrane. Residues 285–305 (LVFTFPLIYSIFQIAFAAILL) traverse the membrane as a helical segment. Residues 306–348 (GAYVAYKKCHGKNNTELQEKTDNEMEPRSSFQETNKGFQPDEK) lie on the Cytoplasmic side of the membrane. Basic and acidic residues predominate over residues 322-332 (LQEKTDNEMEP). Residues 322–348 (LQEKTDNEMEPRSSFQETNKGFQPDEK) are disordered. Position 335 is a phosphoserine (Ser335).

This sequence belongs to the bile acid:sodium symporter (BASS) (TC 2.A.28) family. As to quaternary structure, monomer and homodimer. Mainly expressed in ileum and kidney, lower expression in jejunum.

It is found in the membrane. It carries out the reaction taurocholate(out) + 2 Na(+)(out) = taurocholate(in) + 2 Na(+)(in). It catalyses the reaction cholate(out) + 2 Na(+)(out) = cholate(in) + 2 Na(+)(in). The catalysed reaction is taurochenodeoxycholate(out) + 2 Na(+)(out) = taurochenodeoxycholate(in) + 2 Na(+)(in). The enzyme catalyses tauroursodeoxycholate(out) + 2 Na(+)(out) = tauroursodeoxycholate(in) + 2 Na(+)(in). It carries out the reaction glycocholate(out) + 2 Na(+)(out) = glycocholate(in) + 2 Na(+)(in). It catalyses the reaction tauronorcholate(out) + 2 Na(+)(out) = tauronorcholate(in) + 2 Na(+)(in). The catalysed reaction is tauroallocholate(out) + 2 Na(+)(out) = tauroallocholate(in) + 2 Na(+)(in). The enzyme catalyses taurodeoxycholate(out) + 2 Na(+)(out) = taurodeoxycholate(in) + 2 Na(+)(in). It carries out the reaction tauro-beta-muricholate(out) + 2 Na(+)(out) = tauro-beta-muricholate(in) + 2 Na(+)(in). Functionally, plays a critical role in the sodium-dependent reabsorption of bile acids from the lumen of the small intestine. Transports various bile acids, unconjugated or conjugated, such as cholate and taurocholate. Also responsible for bile acid transport in the renal proximal tubules, a salvage mechanism that helps conserve bile acids. Works collaboratively with the Na(+)-taurocholate cotransporting polypeptide (NTCP), the organic solute transporter (OST), and the bile salt export pump (BSEP), to ensure efficacious biological recycling of bile acids during enterohepatic circulation. This is Ileal sodium/bile acid cotransporter (SLC10A2) from Cricetulus griseus (Chinese hamster).